The chain runs to 346 residues: ATP-dependent 6-phosphofructokinase (346 aa).

ATP contacts are provided by residues G13, 76 to 77, and 106 to 109; these read RL and GEGT. E107 is a binding site for Mg(2+). Substrate-binding positions include 129-131, R166, 173-175, E226, R270, and 276-279; these read TID, MGR, and HIQR. D131 (proton acceptor) is an active-site residue.

Belongs to the phosphofructokinase type A (PFKA) family. Mixed-substrate PFK group III subfamily. In terms of assembly, homodimer or homotetramer. It depends on Mg(2+) as a cofactor.

It localises to the cytoplasm. It carries out the reaction beta-D-fructose 6-phosphate + ATP = beta-D-fructose 1,6-bisphosphate + ADP + H(+). Its pathway is carbohydrate degradation; glycolysis; D-glyceraldehyde 3-phosphate and glycerone phosphate from D-glucose: step 3/4. Its function is as follows. Catalyzes the phosphorylation of D-fructose 6-phosphate to fructose 1,6-bisphosphate by ATP, the first committing step of glycolysis. The sequence is that of ATP-dependent 6-phosphofructokinase from Corynebacterium efficiens (strain DSM 44549 / YS-314 / AJ 12310 / JCM 11189 / NBRC 100395).